A 250-amino-acid chain; its full sequence is DNA polymerase sliding clamp (250 aa).

The protein belongs to the PCNA family. In terms of assembly, homotrimer. The subunits circularize to form a toroid; DNA passes through its center. Replication factor C (RFC) is required to load the toroid on the DNA.

Functionally, sliding clamp subunit that acts as a moving platform for DNA processing. Responsible for tethering the catalytic subunit of DNA polymerase and other proteins to DNA during high-speed replication. This Methanococcus maripaludis (strain C7 / ATCC BAA-1331) protein is DNA polymerase sliding clamp.